The chain runs to 364 residues: 3'(2'),5'-bisphosphate nucleotidase 1 (364 aa).

The active-site Proton acceptor is Asp54. Residues Glu77, Asp141, Ile143, and Asp144 each coordinate Mg(2+). Catalysis depends on Thr146, which acts as the Proton acceptor. Positions 146, 243, 272, 275, 289, and 302 each coordinate adenosine 3',5'-bisphosphate. His243, Ser272, Lys275, Arg289, and Asp302 together coordinate AMP. Asp302 is a binding site for Mg(2+).

The protein belongs to the inositol monophosphatase superfamily. Mg(2+) is required as a cofactor.

It catalyses the reaction 3'-phosphoadenylyl sulfate + H2O = adenosine 5'-phosphosulfate + phosphate. The catalysed reaction is adenosine 3',5'-bisphosphate + H2O = AMP + phosphate. The enzyme catalyses adenosine 2',5'-bisphosphate + H2O = AMP + phosphate. Its function is as follows. Phosphatase that converts adenosine 3'-phosphate 5'-phosphosulfate (PAPS) to adenosine 5'-phosphosulfate (APS) and 3'(2')-phosphoadenosine 5'-phosphate (PAP) to AMP. Regulates the flux of sulfur in the sulfur-activation pathway by converting PAPS to APS. Involved in salt tolerance. The sequence is that of 3'(2'),5'-bisphosphate nucleotidase 1 (HAL21) from Candida albicans (strain SC5314 / ATCC MYA-2876) (Yeast).